The following is a 188-amino-acid chain: Peptidyl-tRNA hydrolase (188 aa).

TRNA is bound at residue Y14. H19 functions as the Proton acceptor in the catalytic mechanism. Positions 64, 66, and 112 each coordinate tRNA.

The protein belongs to the PTH family. In terms of assembly, monomer.

The protein localises to the cytoplasm. The catalysed reaction is an N-acyl-L-alpha-aminoacyl-tRNA + H2O = an N-acyl-L-amino acid + a tRNA + H(+). Hydrolyzes ribosome-free peptidyl-tRNAs (with 1 or more amino acids incorporated), which drop off the ribosome during protein synthesis, or as a result of ribosome stalling. In terms of biological role, catalyzes the release of premature peptidyl moieties from peptidyl-tRNA molecules trapped in stalled 50S ribosomal subunits, and thus maintains levels of free tRNAs and 50S ribosomes. Releases Ala-tailed nascent peptides from stalled 50S ribosomal subunits. Non-templated Ala tailing occurs as part of the ribosome quality control (RQC) pathway. In the absence of Ala tails significantly less peptide release occurs. The Ala tail facilitates the interaction of Pth with the nascent peptide-tRNA ester bond as well as promoting nascent chain degradation; 3 Ala residues suffice to stimulate peptide release from stalled 50S ribosomal subunits. Complements a temperature-sensitive pth mutation in E.coli. The chain is Peptidyl-tRNA hydrolase from Bacillus subtilis (strain 168).